Consider the following 603-residue polypeptide: Penicillin-binding protein activator LpoA (603 aa).

An N-terminal signal peptide occupies residues 1–26 (MANMTPRKNSVTRLIAPVALALTLAA). C27 carries the N-palmitoyl cysteine lipid modification. C27 carries S-diacylglycerol cysteine lipidation.

This sequence belongs to the LpoA family. Interacts with PBP1a.

The protein resides in the cell outer membrane. Its function is as follows. Regulator of peptidoglycan synthesis that is essential for the function of penicillin-binding protein 1A (PBP1a). The polypeptide is Penicillin-binding protein activator LpoA (Aliivibrio fischeri (strain ATCC 700601 / ES114) (Vibrio fischeri)).